Here is a 118-residue protein sequence, read N- to C-terminus: Large ribosomal subunit protein bL20 (118 aa).

This sequence belongs to the bacterial ribosomal protein bL20 family.

Functionally, binds directly to 23S ribosomal RNA and is necessary for the in vitro assembly process of the 50S ribosomal subunit. It is not involved in the protein synthesizing functions of that subunit. The sequence is that of Large ribosomal subunit protein bL20 from Synechococcus sp. (strain JA-2-3B'a(2-13)) (Cyanobacteria bacterium Yellowstone B-Prime).